Reading from the N-terminus, the 339-residue chain is Anthranilate phosphoribosyltransferase (339 aa).

5-phospho-alpha-D-ribose 1-diphosphate-binding positions include glycine 81, glycine 84–aspartate 85, threonine 89, asparagine 91–threonine 94, lysine 109–serine 117, and alanine 121. Residue glycine 81 coordinates anthranilate. Residue serine 93 participates in Mg(2+) binding. Asparagine 112 lines the anthranilate pocket. Arginine 167 is a binding site for anthranilate. Mg(2+)-binding residues include aspartate 226 and glutamate 227.

The protein belongs to the anthranilate phosphoribosyltransferase family. Homodimer. Mg(2+) is required as a cofactor.

The catalysed reaction is N-(5-phospho-beta-D-ribosyl)anthranilate + diphosphate = 5-phospho-alpha-D-ribose 1-diphosphate + anthranilate. Its pathway is amino-acid biosynthesis; L-tryptophan biosynthesis; L-tryptophan from chorismate: step 2/5. Its function is as follows. Catalyzes the transfer of the phosphoribosyl group of 5-phosphorylribose-1-pyrophosphate (PRPP) to anthranilate to yield N-(5'-phosphoribosyl)-anthranilate (PRA). In Roseobacter denitrificans (strain ATCC 33942 / OCh 114) (Erythrobacter sp. (strain OCh 114)), this protein is Anthranilate phosphoribosyltransferase.